We begin with the raw amino-acid sequence, 221 residues long: HTH-type transcriptional regulator McbR (221 aa).

The region spanning 10–77 is the HTH gntR-type domain; the sequence is VSLTLQVEND…PAQAFTVPEV (68 aa). The H-T-H motif DNA-binding region spans 37 to 56; sequence TKNLAEQLGMSITPVREALL.

In terms of biological role, important for biofilm formation. Represses expression of McbA by binding to its promoter region, which prevents colanic acid overproduction and mucoidy. The sequence is that of HTH-type transcriptional regulator McbR (mcbR) from Escherichia coli (strain K12).